Reading from the N-terminus, the 46-residue chain is Photosystem II reaction center protein K (46 aa).

Residues 1 to 9 (MSTLPILLA) constitute a propeptide that is removed on maturation. Residues 25-45 (LPSIPVLFLLLAFVWQAAVSF) traverse the membrane as a helical segment.

This sequence belongs to the PsbK family. In terms of assembly, PSII is composed of 1 copy each of membrane proteins PsbA, PsbB, PsbC, PsbD, PsbE, PsbF, PsbH, PsbI, PsbJ, PsbK, PsbL, PsbM, PsbT, PsbX, PsbY, PsbZ, Psb30/Ycf12, at least 3 peripheral proteins of the oxygen-evolving complex and a large number of cofactors. It forms dimeric complexes.

It is found in the plastid. The protein resides in the chloroplast thylakoid membrane. Its function is as follows. One of the components of the core complex of photosystem II (PSII). PSII is a light-driven water:plastoquinone oxidoreductase that uses light energy to abstract electrons from H(2)O, generating O(2) and a proton gradient subsequently used for ATP formation. It consists of a core antenna complex that captures photons, and an electron transfer chain that converts photonic excitation into a charge separation. This chain is Photosystem II reaction center protein K, found in Nephroselmis olivacea (Green alga).